A 706-amino-acid chain; its full sequence is Envelope glycoprotein H (706 aa).

The N-terminal stretch at 1 to 18 is a signal peptide; the sequence is MQLLCVFCLVLLWEVGAA. Over 19–682 the chain is Virion surface; it reads SLSEVKLHLD…LYEERAHVVL (664 aa). The N-linked (GlcNAc...) asparagine; by host glycan is linked to Asn-60. The interaction with gL stretch occupies residues 165–229; it reads DKFQYTGAMT…QSGDYSLVIV (65 aa). The cysteines at positions 278 and 335 are disulfide-linked. The N-linked (GlcNAc...) asparagine; by host glycan is linked to Asn-435. Disulfide bonds link Cys-454–Cys-478 and Cys-534–Cys-587. 2 N-linked (GlcNAc...) asparagine; by host glycosylation sites follow: Asn-549 and Asn-604. Cys-612 and Cys-615 are oxidised to a cystine. A glycan (N-linked (GlcNAc...) asparagine; by host) is linked at Asn-664. The helical transmembrane segment at 683–703 threads the bilayer; it reads AIILYFIAFALGIFLVHKIVM. Over 704 to 706 the chain is Intravirion; sequence FFL.

Belongs to the herpesviridae glycoprotein H family. As to quaternary structure, interacts with glycoprotein L (gL); this interaction is necessary for the correct processing and cell surface expression of gH. The heterodimer gH/gL seems to interact with gB trimers during fusion. The heterodimer gH/gL interacts with host EPHA2 to facilitate virus internalization and fusion. Interacts with glycoprotein 42/BZLF2. N-glycosylated, O-glycosylated, and sialylated.

Its subcellular location is the virion membrane. It is found in the host cell membrane. The protein resides in the host endosome membrane. Its function is as follows. The heterodimer glycoprotein H-glycoprotein L is required for the fusion of viral and plasma membranes leading to virus entry into the host cell. Following initial binding to host receptor, membrane fusion is mediated by the fusion machinery composed of gB and the heterodimer gH/gL. May also be involved in the fusion between the virion envelope and the outer nuclear membrane during virion morphogenesis. The heterodimer gH/gL targets also host EPHA2 to promote viral entry. This Homo sapiens (Human) protein is Envelope glycoprotein H.